A 100-amino-acid polypeptide reads, in one-letter code: Urease subunit gamma (100 aa).

It belongs to the urease gamma subunit family. In terms of assembly, heterotrimer of UreA (gamma), UreB (beta) and UreC (alpha) subunits. Three heterotrimers associate to form the active enzyme.

The protein localises to the cytoplasm. It catalyses the reaction urea + 2 H2O + H(+) = hydrogencarbonate + 2 NH4(+). It functions in the pathway nitrogen metabolism; urea degradation; CO(2) and NH(3) from urea (urease route): step 1/1. This Rhizobium etli (strain CIAT 652) protein is Urease subunit gamma.